Reading from the N-terminus, the 168-residue chain is Photosystem I assembly protein Ycf3 (168 aa).

TPR repeat units follow at residues 35–68 (AFTY…EIDP), 72–105 (SYIL…NPFL), and 120–153 (GEQA…TPGN).

This sequence belongs to the Ycf3 family.

It is found in the plastid. It localises to the chloroplast thylakoid membrane. Functionally, essential for the assembly of the photosystem I (PSI) complex. May act as a chaperone-like factor to guide the assembly of the PSI subunits. The polypeptide is Photosystem I assembly protein Ycf3 (Illicium oligandrum (Star anise)).